Reading from the N-terminus, the 1438-residue chain is DNA polymerase III PolC-type (1438 aa).

In terms of domain architecture, Exonuclease spans 422 to 578 (YVVFDVETTG…YDTEATAYMF (157 aa)).

The protein belongs to the DNA polymerase type-C family. PolC subfamily.

Its subcellular location is the cytoplasm. The enzyme catalyses DNA(n) + a 2'-deoxyribonucleoside 5'-triphosphate = DNA(n+1) + diphosphate. Required for replicative DNA synthesis. This DNA polymerase also exhibits 3' to 5' exonuclease activity. The sequence is that of DNA polymerase III PolC-type from Staphylococcus saprophyticus subsp. saprophyticus (strain ATCC 15305 / DSM 20229 / NCIMB 8711 / NCTC 7292 / S-41).